A 127-amino-acid chain; its full sequence is Large ribosomal subunit protein bL20 (127 aa).

The protein belongs to the bacterial ribosomal protein bL20 family.

In terms of biological role, binds directly to 23S ribosomal RNA and is necessary for the in vitro assembly process of the 50S ribosomal subunit. It is not involved in the protein synthesizing functions of that subunit. The protein is Large ribosomal subunit protein bL20 of Bifidobacterium longum (strain DJO10A).